We begin with the raw amino-acid sequence, 419 residues long: UDP-N-acetylglucosamine 1-carboxyvinyltransferase (419 aa).

Phosphoenolpyruvate is bound at residue 22-23 (KN). Position 93 (Arg-93) interacts with UDP-N-acetyl-alpha-D-glucosamine. Cys-117 acts as the Proton donor in catalysis. Cys-117 bears the 2-(S-cysteinyl)pyruvic acid O-phosphothioketal mark. The UDP-N-acetyl-alpha-D-glucosamine site is built by Asp-306 and Ile-328.

This sequence belongs to the EPSP synthase family. MurA subfamily.

It is found in the cytoplasm. It catalyses the reaction phosphoenolpyruvate + UDP-N-acetyl-alpha-D-glucosamine = UDP-N-acetyl-3-O-(1-carboxyvinyl)-alpha-D-glucosamine + phosphate. The protein operates within cell wall biogenesis; peptidoglycan biosynthesis. Cell wall formation. Adds enolpyruvyl to UDP-N-acetylglucosamine. The protein is UDP-N-acetylglucosamine 1-carboxyvinyltransferase of Vesicomyosocius okutanii subsp. Calyptogena okutanii (strain HA).